Reading from the N-terminus, the 434-residue chain is Probable exopolygalacturonase X (434 aa).

The first 23 residues, 1–23 (MKFLHTVAQTATLLLSLGASVEG), serve as a signal peptide directing secretion. A disordered region spans residues 35 to 54 (HHPFRPLPASTPRTKTCHVR). Residues Asn-113, Asn-129, and Asn-199 are each glycosylated (N-linked (GlcNAc...) asparagine). A PbH1 1 repeat occupies 231–252 (SSNIVIQNSVVNNGDDCVSFKP). The active-site Proton donor is the Asp-245. Cys-247 and Cys-264 are disulfide-bonded. Residues Asn-253 and Asn-265 are each glycosylated (N-linked (GlcNAc...) asparagine). A PbH1 2 repeat occupies 254-274 (STDILVQNMHCNGSHGISVGS). Residue His-268 is part of the active site. Asn-292, Asn-297, Asn-329, Asn-354, and Asn-364 each carry an N-linked (GlcNAc...) asparagine glycan. Residues 327–348 (VSNITYDRMYIENVDWAIEVTQ) form a PbH1 3 repeat. Residues 362 to 394 (PSNLTISDVHIKNMWGTTSGKRDPNVGTIVCSS) form a PbH1 4 repeat. The cysteines at positions 392 and 398 are disulfide-linked. Asn-407 and Asn-430 each carry an N-linked (GlcNAc...) asparagine glycan.

Belongs to the glycosyl hydrolase 28 family.

The protein localises to the secreted. It carries out the reaction [(1-&gt;4)-alpha-D-galacturonosyl](n) + H2O = alpha-D-galacturonate + [(1-&gt;4)-alpha-D-galacturonosyl](n-1). Specific in hydrolyzing the terminal glycosidic bond of polygalacturonic acid and oligogalacturonates. This chain is Probable exopolygalacturonase X (pgaX), found in Aspergillus terreus (strain NIH 2624 / FGSC A1156).